The following is a 1393-amino-acid chain: DNA-directed RNA polymerase subunit beta' (1393 aa).

The Zn(2+) site is built by Cys-72, Cys-74, Cys-87, and Cys-90. Residues Asp-463, Asp-465, and Asp-467 each contribute to the Mg(2+) site. Zn(2+)-binding residues include Cys-812, Cys-887, Cys-894, and Cys-897.

This sequence belongs to the RNA polymerase beta' chain family. As to quaternary structure, the RNAP catalytic core consists of 2 alpha, 1 beta, 1 beta' and 1 omega subunit. When a sigma factor is associated with the core the holoenzyme is formed, which can initiate transcription. The cofactor is Mg(2+). Zn(2+) is required as a cofactor.

The enzyme catalyses RNA(n) + a ribonucleoside 5'-triphosphate = RNA(n+1) + diphosphate. Its function is as follows. DNA-dependent RNA polymerase catalyzes the transcription of DNA into RNA using the four ribonucleoside triphosphates as substrates. The chain is DNA-directed RNA polymerase subunit beta' from Chlamydia abortus (strain DSM 27085 / S26/3) (Chlamydophila abortus).